A 210-amino-acid polypeptide reads, in one-letter code: MSTRLVVSGTDTDVGKTVFSAALAGALDADYWKPVQAGRDDGTDALRVARLSGLPPERILPERYILNTPASPHYAARIDGITIDTNDLTPPPAKDRPLVIEGAGGLMVPINEDTLFIDVFARWKLPLVLCARTTLGTINHSLLSIEAVKRRDIPLVGIAFIGEDYAESERIICKIGGVRHLGRLPPLSPLTPEALRAAFITSFNLSDFTA.

Residue 13–18 (DVGKTV) coordinates ATP. Thr-17 contributes to the Mg(2+) binding site. Residue Lys-33 is part of the active site. Mg(2+) contacts are provided by Arg-47 and Glu-101. Residues 101–104 (EGAG) and 185–187 (PPL) each bind ATP.

Belongs to the dethiobiotin synthetase family. As to quaternary structure, homodimer. It depends on Mg(2+) as a cofactor.

The protein localises to the cytoplasm. The enzyme catalyses (7R,8S)-7,8-diammoniononanoate + CO2 + ATP = (4R,5S)-dethiobiotin + ADP + phosphate + 3 H(+). It functions in the pathway cofactor biosynthesis; biotin biosynthesis; biotin from 7,8-diaminononanoate: step 1/2. Functionally, catalyzes a mechanistically unusual reaction, the ATP-dependent insertion of CO2 between the N7 and N8 nitrogen atoms of 7,8-diaminopelargonic acid (DAPA, also called 7,8-diammoniononanoate) to form a ureido ring. The polypeptide is ATP-dependent dethiobiotin synthetase BioD (Afipia carboxidovorans (strain ATCC 49405 / DSM 1227 / KCTC 32145 / OM5) (Oligotropha carboxidovorans)).